The sequence spans 148 residues: Small ribosomal subunit protein uS12 (148 aa).

Belongs to the universal ribosomal protein uS12 family. Part of the 30S ribosomal subunit.

Its function is as follows. With S4 and S5 plays an important role in translational accuracy. Located at the interface of the 30S and 50S subunits. The protein is Small ribosomal subunit protein uS12 of Methanocaldococcus jannaschii (strain ATCC 43067 / DSM 2661 / JAL-1 / JCM 10045 / NBRC 100440) (Methanococcus jannaschii).